We begin with the raw amino-acid sequence, 476 residues long: Cysteine--tRNA ligase (476 aa).

Residue cysteine 31 participates in Zn(2+) binding. The 'HIGH' region motif lies at proline 33–asparagine 43. Residues cysteine 211, histidine 236, and glutamate 240 each coordinate Zn(2+). The 'KMSKS' region signature appears at lysine 269 to serine 273. Lysine 272 serves as a coordination point for ATP.

Belongs to the class-I aminoacyl-tRNA synthetase family. As to quaternary structure, monomer. The cofactor is Zn(2+).

The protein localises to the cytoplasm. It catalyses the reaction tRNA(Cys) + L-cysteine + ATP = L-cysteinyl-tRNA(Cys) + AMP + diphosphate. The chain is Cysteine--tRNA ligase from Xanthomonas axonopodis pv. citri (strain 306).